A 238-amino-acid polypeptide reads, in one-letter code: Accessory gene regulator A (238 aa).

In terms of domain architecture, Response regulatory spans 2–125 (KIFICEDDPK…LRTRIIDCLE (124 aa)). Asp-59 carries the 4-aspartylphosphate modification. One can recognise an HTH LytTR-type domain in the interval 143 to 238 (IELKRGSNSV…YASVRNVKKI (96 aa)).

Its subcellular location is the cytoplasm. Required for high-level post-exponential phase expression of a series of secreted proteins. This chain is Accessory gene regulator A (agrA), found in Staphylococcus aureus (strain COL).